We begin with the raw amino-acid sequence, 120 residues long: uncharacterized protein (120 aa).

Residues 63–83 (IDMSCVICFNFSCHLFVVIFI) traverse the membrane as a helical segment.

It is found in the membrane. This is an uncharacterized protein from Saccharomyces cerevisiae (strain ATCC 204508 / S288c) (Baker's yeast).